A 230-amino-acid chain; its full sequence is Response regulator MprA (230 aa).

The region spanning 4–118 is the Response regulatory domain; that stretch reads RILVVDDDRA…ELLARMRALL (115 aa). Aspartate 48 carries the post-translational modification 4-aspartylphosphate. Residues 129-227 constitute a DNA-binding region (ompR/PhoB-type); the sequence is SPALTFLDLT…VRGVGYVLRE (99 aa).

Phosphorylated and dephosphorylated by MprB.

It is found in the cytoplasm. Functionally, member of the two-component regulatory system MprB/MprA which contributes to maintaining a balance among several systems involved in stress resistance and is required for establishment and maintenance of persistent infection in the host. Functions as a transcriptional regulator that recognizes a 19-bp nucleotide motif comprizing two loosely conserved 8-bp direct DNA-binding motif repeats separated by a 3-bp spacer region. This Mycobacterium sp. (strain JLS) protein is Response regulator MprA (mprA).